A 180-amino-acid chain; its full sequence is uncharacterized protein (180 aa).

The interval 1-31 (MSTYEEEHGIQQNSRDYQEVGGTSQEEQRRQ) is disordered. Ser2 bears the N-acetylserine mark. The RING-type zinc finger occupies 109-153 (CSICYTNYLEDEYPLVVELPHCHHKFDLECLSVWLSRSTTCPLCR).

This is an uncharacterized protein from Saccharomyces cerevisiae (strain ATCC 204508 / S288c) (Baker's yeast).